Consider the following 117-residue polypeptide: Holo-[acyl-carrier-protein] synthase (117 aa).

Mg(2+) is bound by residues Asp8 and Glu58.

It belongs to the P-Pant transferase superfamily. AcpS family. Mg(2+) serves as cofactor.

It localises to the cytoplasm. The enzyme catalyses apo-[ACP] + CoA = holo-[ACP] + adenosine 3',5'-bisphosphate + H(+). In terms of biological role, transfers the 4'-phosphopantetheine moiety from coenzyme A to a Ser of acyl-carrier-protein. In Shouchella clausii (strain KSM-K16) (Alkalihalobacillus clausii), this protein is Holo-[acyl-carrier-protein] synthase.